A 321-amino-acid polypeptide reads, in one-letter code: Glycerol-3-phosphate phosphatase (321 aa).

The Nucleophile role is filled by Asp34. 3 residues coordinate Mg(2+): Asp34, Asp36, and Asp260. The active-site Proton donor is Asp36.

The protein belongs to the HAD-like hydrolase superfamily. CbbY/CbbZ/Gph/YieH family. Homodimer. Mg(2+) is required as a cofactor. As to expression, ubiquitously expressed with higher expression in testis, heart, skeletal muscle and islet tissue (at protein level).

The enzyme catalyses O-phospho-L-tyrosyl-[protein] + H2O = L-tyrosyl-[protein] + phosphate. It catalyses the reaction sn-glycerol 1-phosphate + H2O = glycerol + phosphate. The catalysed reaction is sn-glycerol 3-phosphate + H2O = glycerol + phosphate. Inhibited by orthovanadate, beryllium trifluoride, Ca(2+) and EDTA. Its function is as follows. Glycerol-3-phosphate phosphatase hydrolyzing glycerol-3-phosphate into glycerol. Thereby, regulates the cellular levels of glycerol-3-phosphate a metabolic intermediate of glucose, lipid and energy metabolism. Was also shown to have a 2-phosphoglycolate phosphatase activity and a tyrosine-protein phosphatase activity. However, their physiological relevance is unclear. In vitro, also has a phosphatase activity toward ADP, ATP, GDP and GTP. The chain is Glycerol-3-phosphate phosphatase from Mus musculus (Mouse).